The following is a 337-amino-acid chain: Protein FAM169B (337 aa).

The tract at residues 278–326 is disordered; it reads STVHPKCSEEDTDTPGQASQEDGPTQFNHGESHKEWAVGEPERTQNGRR. The span at 291 to 306 shows a compositional bias: polar residues; that stretch reads TPGQASQEDGPTQFNH. Basic and acidic residues predominate over residues 307-322; the sequence is GESHKEWAVGEPERTQ.

It belongs to the FAM169 family.

In Mus musculus (Mouse), this protein is Protein FAM169B (Fam169b).